Reading from the N-terminus, the 138-residue chain is uncharacterized protein (138 aa).

This is an uncharacterized protein from Methanocaldococcus jannaschii (strain ATCC 43067 / DSM 2661 / JAL-1 / JCM 10045 / NBRC 100440) (Methanococcus jannaschii).